The chain runs to 208 residues: MTEDDCKVAEALNVSRETLGKLEQYADLVRKWNSAINLIGRSTEGQIWIRHIQDSAQLWGLRAAPFGTWLDLGSGGGLPGIVLATIATEKAPESRFVLVESDQRKATFLRTAARTLCLNVTVHAARVEQLPPQRADVISARALAPLTDLCALAAPHLAPEGMCLFPKGANYASEIAAARLSWNMEPEIHPSVTDPSAVILKLKAMAHV.

S-adenosyl-L-methionine contacts are provided by residues glycine 73, leucine 78, 127 to 128 (VE), and arginine 141.

This sequence belongs to the methyltransferase superfamily. RNA methyltransferase RsmG family.

The protein resides in the cytoplasm. It carries out the reaction guanosine(527) in 16S rRNA + S-adenosyl-L-methionine = N(7)-methylguanosine(527) in 16S rRNA + S-adenosyl-L-homocysteine. In terms of biological role, specifically methylates the N7 position of guanine in position 527 of 16S rRNA. The chain is Ribosomal RNA small subunit methyltransferase G from Cereibacter sphaeroides (strain ATCC 17025 / ATH 2.4.3) (Rhodobacter sphaeroides).